Here is a 72-residue protein sequence, read N- to C-terminus: Neuropeptide SIFamide (72 aa).

The first 26 residues, 1–26, serve as a signal peptide directing secretion; sequence MALRFTLTLLLVTILVAAILLGSSEA. Residue Asn34 is glycosylated (N-linked (GlcNAc...) asparagine). Phe38 carries the phenylalanine amide modification. The propeptide occupies 42-72; the sequence is NSLDYDSAKMSAVCEVAMEACPMWFPQNDSK.

This sequence belongs to the FARP (FMRFamide related peptide) family. Strongly expressed in two pairs of neurons in the pars intercerebralis (at protein level).

It is found in the secreted. Ligand for the neuropeptide SIFamide receptor. Modulates sexual behavior by negatively regulating female receptivity to male courtship and by playing a role in male sex discrimination. Also involved in promoting sleep. In Drosophila melanogaster (Fruit fly), this protein is Neuropeptide SIFamide.